A 247-amino-acid chain; its full sequence is MVDRLANSEANSKRIGVVEACFGTAGQPLAIPGRVLIGEGVLTKLCRKRPKARQFFLFNDILVYGNIVIQKKKYNKQHIIPLESVTIDTVEDEGELRNGWLIKTPTKSFAVYAATATEKSEWMSHINKCVSDLLEKSGKSPTGEHAAVWVPDSEATVCMRCQKMKFTPVNRRHHCRKCGFVVCGPCSEKKFLLPSQSSKPVRVCEFCYKQLSTGATLPPRSDSYSRQGSDFGSNNISDDDDDDDSSD.

The region spanning Val-35–Ser-131 is the PH domain. Residues Asp-152–Ser-212 form an FYVE-type zinc finger. 8 residues coordinate Zn(2+): Cys-158, Cys-161, Cys-175, Cys-178, Cys-183, Cys-186, Cys-204, and Cys-207. Positions Thr-213–Asp-247 are disordered. The segment covering Asp-222–Ile-236 has biased composition (polar residues). The span at Ser-237–Asp-247 shows a compositional bias: acidic residues.

The protein localises to the early endosome membrane. It localises to the endoplasmic reticulum. In terms of biological role, may play a role in early endosome fusion upstream of RAB5, hence regulating receptor trafficking and fluid-phase transport. Enhances cellular sensitivity to TNF-induced apoptosis. This Danio rerio (Zebrafish) protein is Pleckstrin homology domain-containing family F member 2 (plekhf2).